A 298-amino-acid chain; its full sequence is uncharacterized protein (298 aa).

This sequence belongs to the glycosyltransferase 2 family.

This is an uncharacterized protein from Mycoplasma genitalium (strain ATCC 33530 / DSM 19775 / NCTC 10195 / G37) (Mycoplasmoides genitalium).